The primary structure comprises 473 residues: Cytochrome c-552 (473 aa).

The signal sequence occupies residues 1-33 (MQHGDEMMKKMTGKSFALSALVAASFMAAGAMA). His-93 contacts heme c. Heme-binding residues include Cys-121, Cys-124, and Lys-125. Cys-159, Cys-162, His-163, Cys-201, Cys-204, and His-205 together coordinate heme c. Ca(2+)-binding residues include Glu-207, Tyr-208, Lys-256, and Gln-258. Tyr-208 lines the substrate pocket. A substrate-binding site is contributed by His-259. His-270, Cys-277, Cys-280, His-281, His-296, Cys-309, Cys-312, His-313, and His-388 together coordinate heme c.

The protein belongs to the cytochrome c-552 family. Ca(2+) serves as cofactor. The cofactor is heme c.

The protein localises to the periplasm. It catalyses the reaction 6 Fe(III)-[cytochrome c] + NH4(+) + 2 H2O = 6 Fe(II)-[cytochrome c] + nitrite + 8 H(+). It functions in the pathway nitrogen metabolism; nitrate reduction (assimilation). Functionally, catalyzes the reduction of nitrite to ammonia, consuming six electrons in the process. The sequence is that of Cytochrome c-552 from Shewanella sp. (strain ANA-3).